Reading from the N-terminus, the 341-residue chain is Tryptophan--tRNA ligase (341 aa).

Residues 11–13 (RPT) and 19–20 (GH) each bind ATP. The short motif at 12-20 (PTGKLHIGH) is the 'HIGH' region element. L-tryptophan is bound at residue D140. ATP contacts are provided by residues 152-154 (GTD), L194, and 202-206 (KMSKS). The 'KMSKS' region motif lies at 202 to 206 (KMSKS).

This sequence belongs to the class-I aminoacyl-tRNA synthetase family. Homodimer.

The protein localises to the cytoplasm. The catalysed reaction is tRNA(Trp) + L-tryptophan + ATP = L-tryptophyl-tRNA(Trp) + AMP + diphosphate + H(+). Functionally, catalyzes the attachment of tryptophan to tRNA(Trp). The chain is Tryptophan--tRNA ligase from Streptococcus pneumoniae serotype 4 (strain ATCC BAA-334 / TIGR4).